A 1098-amino-acid polypeptide reads, in one-letter code: Mediator of RNA polymerase II transcription subunit 5 (1098 aa).

The tract at residues 1019–1041 (PDDVQKSADMKPDTGIKEDDSEK) is disordered. The span at 1021–1041 (DVQKSADMKPDTGIKEDDSEK) shows a compositional bias: basic and acidic residues.

It belongs to the Mediator complex subunit 5 family. As to quaternary structure, component of the Mediator complex.

Its subcellular location is the nucleus. Functionally, component of the Mediator complex, a coactivator involved in the regulated transcription of nearly all RNA polymerase II-dependent genes. Mediator functions as a bridge to convey information from gene-specific regulatory proteins to the basal RNA polymerase II transcription machinery. Mediator is recruited to promoters by direct interactions with regulatory proteins and serves as a scaffold for the assembly of a functional preinitiation complex with RNA polymerase II and the general transcription factors. The sequence is that of Mediator of RNA polymerase II transcription subunit 5 (NUT1) from Eremothecium gossypii (strain ATCC 10895 / CBS 109.51 / FGSC 9923 / NRRL Y-1056) (Yeast).